Here is a 184-residue protein sequence, read N- to C-terminus: Mediator of RNA polymerase II transcription subunit 11 (184 aa).

The segment covering 142–152 (ATTKQETNINN) has biased composition (polar residues). A disordered region spans residues 142–184 (ATTKQETNINNEDSEKEKQENITAIETKKESSENEDEDFDMIA). Positions 154–173 (DSEKEKQENITAIETKKESS) are enriched in basic and acidic residues. The segment covering 174–184 (ENEDEDFDMIA) has biased composition (acidic residues).

Belongs to the Mediator complex subunit 11 family. In terms of assembly, component of the Mediator complex.

It localises to the nucleus. In terms of biological role, component of the Mediator complex, a coactivator involved in the regulated transcription of nearly all RNA polymerase II-dependent genes. Mediator functions as a bridge to convey information from gene-specific regulatory proteins to the basal RNA polymerase II transcription machinery. Mediator is recruited to promoters by direct interactions with regulatory proteins and serves as a scaffold for the assembly of a functional pre-initiation complex with RNA polymerase II and the general transcription factors. This is Mediator of RNA polymerase II transcription subunit 11 (MED11) from Debaryomyces hansenii (strain ATCC 36239 / CBS 767 / BCRC 21394 / JCM 1990 / NBRC 0083 / IGC 2968) (Yeast).